Consider the following 123-residue polypeptide: Small ribosomal subunit protein uS12cz/uS12cy (123 aa).

This sequence belongs to the universal ribosomal protein uS12 family. In terms of assembly, part of the 30S ribosomal subunit.

It localises to the plastid. Its subcellular location is the chloroplast. Functionally, with S4 and S5 plays an important role in translational accuracy. Located at the interface of the 30S and 50S subunits. The protein is Small ribosomal subunit protein uS12cz/uS12cy (rps12-A) of Nymphaea alba (White water-lily).